Here is a 405-residue protein sequence, read N- to C-terminus: MTKIYSSIAVKKGLFTSFLLFIYVLGSRIILPFVDLNTKDFLGGSTAYLAFSAALTGGNLRSLSIFSVGLSPWMSAMILWQMFSFSKRLGLTSTSIEIQDRRKMYLTLLIAVIQSLAVSLRLPVQSSYSAILVVLMNTILLIAGTFFLVWLSDLNASMGIGGSIVILLSSMVLNIPQDVLETFQTVHIPTGIIVLLALLTLVFSYLLALMYRARYLVPVNKIGLHNRFKRYSYLEIMLNPAGGMPYMYVMSFLSVPAYLFILLGFIFPNHSGLAALSKEFMVGKPLWVYVYISVLFLFSIIFAFVTMNGEEIADRMKKSGEYIYGIYPGADTSRFINRLVLRFSVIGGLFNVIMAGGPMLFVLFDEKLLRLAMIPGLFMMFGGMIFTIRDEVKALRLNETYRPLI.

10 consecutive transmembrane segments (helical) span residues leucine 14–valine 34, isoleucine 65–phenylalanine 85, methionine 104–valine 124, isoleucine 131–leucine 151, alanine 156–proline 176, glycine 191–tyrosine 211, methionine 247–phenylalanine 267, proline 285–valine 305, phenylalanine 343–leucine 363, and leucine 368–isoleucine 388.

It belongs to the SecY/SEC61-alpha family. SecY2 subfamily. In terms of assembly, component of the accessory SecA2/SecY2 protein translocase complex required to export cell wall proteins. May form heterotrimers with SecE and SecG subunits.

The protein resides in the cell membrane. Part of the accessory SecA2/SecY2 system specifically required for export of possible cell wall proteins. The central subunit of a protein translocation channel. The chain is Accessory Sec system protein translocase subunit SecY2 from Streptococcus pneumoniae serotype 4 (strain ATCC BAA-334 / TIGR4).